A 114-amino-acid polypeptide reads, in one-letter code: Transmembrane protein 14B (114 aa).

4 helical membrane passes run 8–28, 34–54, 60–80, and 83–103; these read LVPL…GGIV, GSVP…LGAY, PRNV…VMGM, and YYYG…LMAA.

Belongs to the TMEM14 family. In terms of assembly, interacts with IQGAP1; this interaction promotes phosphorylation and nuclear translocation of IQGAP1. Mainly expressed in the outer subventricular zone (OSVZ) of the fetal brains.

The protein localises to the membrane. Functionally, primate-specific protein involved in cortical expansion and folding in the developing neocortex. May drive neural progenitor proliferation through nuclear translocation of IQGAP1, which in turn promotes G1/S cell cycle transitions. In Homo sapiens (Human), this protein is Transmembrane protein 14B (TMEM14B).